Reading from the N-terminus, the 147-residue chain is Hemoglobin subunit epsilon-M (147 aa).

A Globin domain is found at 3–147; the sequence is HFTPEDKTNI…VSSALGHKYH (145 aa). 2 positions are modified to phosphoserine: S14 and S51. Positions 64 and 93 each coordinate heme b.

This sequence belongs to the globin family. Red blood cells.

Hemoglobin epsilon chain is a beta-type chain found in early embryos. This chain is Hemoglobin subunit epsilon-M (HBE1), found in Didelphis virginiana (North American opossum).